Consider the following 75-residue polypeptide: Tautomerase PptA (75 aa).

Residue P2 is the Proton acceptor; via imino nitrogen of the active site.

Belongs to the 4-oxalocrotonate tautomerase family. PptA subfamily. In terms of assembly, homodimer.

The protein resides in the cytoplasm. The protein is Tautomerase PptA of Escherichia coli O127:H6 (strain E2348/69 / EPEC).